The sequence spans 144 residues: 3-hydroxyacyl-[acyl-carrier-protein] dehydratase FabZ (144 aa).

The active site involves His47.

It belongs to the thioester dehydratase family. FabZ subfamily.

It is found in the cytoplasm. The enzyme catalyses a (3R)-hydroxyacyl-[ACP] = a (2E)-enoyl-[ACP] + H2O. In terms of biological role, involved in unsaturated fatty acids biosynthesis. Catalyzes the dehydration of short chain beta-hydroxyacyl-ACPs and long chain saturated and unsaturated beta-hydroxyacyl-ACPs. The sequence is that of 3-hydroxyacyl-[acyl-carrier-protein] dehydratase FabZ from Alcanivorax borkumensis (strain ATCC 700651 / DSM 11573 / NCIMB 13689 / SK2).